The primary structure comprises 487 residues: Serine/threonine-protein kinase BSK8 (487 aa).

Gly-2 carries N-myristoyl glycine lipidation. Ser-20 bears the Phosphoserine mark. The Protein kinase domain occupies 59–325 (ENIVSEHGER…DLEIASHQLL (267 aa)). ATP-binding positions include 65–73 (HGERAPNVV), Asn-71, Lys-87, and 133–135 (EFM). Asp-181 acts as the Proton acceptor in catalysis. ATP contacts are provided by residues 185 to 186 (YR) and Asn-205. Residue Ser-213 is modified to Phosphoserine.

The protein belongs to the protein kinase superfamily. Ser/Thr protein kinase family. As to quaternary structure, interacts with ASK7/BIN2, BSK1, BSK5, BSK6 and BSK11. Interacts with BSL2. Phosphorylated by BRI1, ASK7/BIN2 and ASK9/BIL2.

The protein resides in the cell membrane. It carries out the reaction L-seryl-[protein] + ATP = O-phospho-L-seryl-[protein] + ADP + H(+). It catalyses the reaction L-threonyl-[protein] + ATP = O-phospho-L-threonyl-[protein] + ADP + H(+). Functionally, probable serine/threonine kinase that acts as a positive regulator of brassinosteroid (BR) signaling downstream of the receptor kinase BRI1. Functions redundantly with BSK3, BSK4, BSK6 and BSK7. Involved in the regulation of sucrose-phosphate synthase 1 (SPS1) in the context of sucrose resuply after starvation. Activates BSL2, a phosphatase that may dephosphorylate SPS1, leading to the activation of SPS1. This is Serine/threonine-protein kinase BSK8 from Arabidopsis thaliana (Mouse-ear cress).